We begin with the raw amino-acid sequence, 365 residues long: Aminomethyltransferase (365 aa).

Belongs to the GcvT family. In terms of assembly, the glycine cleavage system is composed of four proteins: P, T, L and H.

It carries out the reaction N(6)-[(R)-S(8)-aminomethyldihydrolipoyl]-L-lysyl-[protein] + (6S)-5,6,7,8-tetrahydrofolate = N(6)-[(R)-dihydrolipoyl]-L-lysyl-[protein] + (6R)-5,10-methylene-5,6,7,8-tetrahydrofolate + NH4(+). Functionally, the glycine cleavage system catalyzes the degradation of glycine. The polypeptide is Aminomethyltransferase (Chlorobium phaeovibrioides (strain DSM 265 / 1930) (Prosthecochloris vibrioformis (strain DSM 265))).